Here is a 752-residue protein sequence, read N- to C-terminus: Ribosomal RNA large subunit methyltransferase K/L (752 aa).

Residues 53 to 164 (QMYKICLWTR…RDELHISIDL (112 aa)) form the THUMP domain.

This sequence belongs to the methyltransferase superfamily. RlmKL family.

The protein resides in the cytoplasm. It carries out the reaction guanosine(2445) in 23S rRNA + S-adenosyl-L-methionine = N(2)-methylguanosine(2445) in 23S rRNA + S-adenosyl-L-homocysteine + H(+). The enzyme catalyses guanosine(2069) in 23S rRNA + S-adenosyl-L-methionine = N(2)-methylguanosine(2069) in 23S rRNA + S-adenosyl-L-homocysteine + H(+). In terms of biological role, specifically methylates the guanine in position 2445 (m2G2445) and the guanine in position 2069 (m7G2069) of 23S rRNA. The chain is Ribosomal RNA large subunit methyltransferase K/L from Saccharophagus degradans (strain 2-40 / ATCC 43961 / DSM 17024).